A 492-amino-acid chain; its full sequence is Myocyte-specific enhancer factor 2A (492 aa).

Residues 3-57 enclose the MADS-box domain; the sequence is RKKIQITRIMDERNRQVTFTKRKFGLMKKAYELSVLCDCEIALIIFNSSNKLFQY. A DNA-binding region (mef2-type) is located at residues 58-86; that stretch reads ASTDMDKVLLKYTEYNEPHESRTNSDIVE. Ser-59 carries the post-translational modification Phosphoserine; by CK2. Ser-98 bears the Phosphoserine mark. Positions 183-227 are disordered; the sequence is PQATLHRNVSPGAPQRPPSTGSAGGMLSTSDLTVPNGAGSSPVGN. Over residues 209–227 the composition is skewed to polar residues; the sequence is LSTSDLTVPNGAGSSPVGN. Residue Ser-235 is modified to Phosphoserine. The disordered stretch occupies residues 242 to 270; it reads TGANSLGKVMPTKSPPPPGGGSLGMNSRK. At Lys-249 the chain carries N6-acetyllysine. Position 255 is a phosphoserine (Ser-255). Residues 266-283 are required for interaction with MAPKs; sequence MNSRKPDLRVVIPPSSKG. A phosphothreonine; by MAPK7 and MAPK14 mark is found at Thr-304 and Thr-311. Ser-347 is modified (phosphoserine; by MAPK7). The span at 382-394 shows a compositional bias: polar residues; that stretch reads SNLSINTNQNINI. The tract at residues 382 to 492 is disordered; the sequence is SNLSINTNQN…KRMRMDAWVT (111 aa). Lys-395 is subject to N6-acetyllysine; alternate. A Glycyl lysine isopeptide (Lys-Gly) (interchain with G-Cter in SUMO); alternate cross-link involves residue Lys-395. At Ser-400 the chain carries Phosphoserine; by CDK5. A Phosphothreonine modification is found at Thr-407. The span at 417–430 shows a compositional bias: pro residues; it reads PQPPPPPPQAPQPQ. Phosphoserine; by MAPK is present on Ser-438. Residues 438–451 show a composition bias toward low complexity; sequence SPVDSLSSSSSSYD. Basic and acidic residues-rich tracts occupy residues 452–462 and 473–492; these read GSDREDPRGDF and NSED…AWVT.

In terms of assembly, binds DNA as a homo- or heterodimer. Dimerizes with MEF2D. Interacts with HDAC7. Interacts with PIAS1; the interaction enhances sumoylation. Interacts with HDAC4, HDAC9 and SLC2A4RG. Interacts (via the N-terminal) with MAPK7; the interaction results in the phosphorylation and transcriptional activity of MEF2A. Post-translationally, constitutive phosphorylation on Ser-400 promotes Lys-395 sumoylation thus preventing acetylation at this site. Dephosphorylation on Ser-400 by PPP3CA upon neuron depolarization promotes a switch from sumoylation to acetylation on residue Lys-395 leading to inhibition of dendrite claw differentiation. Phosphorylation on Thr-304 and Thr-311 are the main sites involved in p38 MAPK signaling and activate transcription. Phosphorylated on these sites by MAPK14/p38alpha and MAPK11/p38beta, but not by MAPK13/p38delta nor by MAPK12/p38gamma. Phosphorylation on Ser-400 by CDK5 induced by neurotoxicity inhibits MEF2A transcriptional activation leading to apoptosis of cortical neurons. Phosphorylation on Thr-304, Thr-311 and Ser-347 can be induced by EGF. In terms of processing, sumoylation on Lys-395 is enhanced by PIAS1 and represses transcriptional activity. Phosphorylation on Ser-400 is required for sumoylation. Has no effect on nuclear location nor on DNA binding. Sumoylated with SUMO1 and, to a lesser extent with SUMO2 and SUMO3. PIASx facilitates sumoylation in postsynaptic dendrites in the cerebellar cortex and promotes their morphogenesis. Acetylation on Lys-395 activates transcriptional activity. Acetylated by p300 on several sites in diffentiating myocytes. Acetylation on Lys-4 increases DNA binding and transactivation. Hyperacetylation by p300 leads to enhanced cardiac myocyte growth and heart failure. Post-translationally, proteolytically cleaved in cerebellar granule neurons on several sites by caspase 3 and caspase 7 following neurotoxicity. Preferentially cleaves the CDK5-mediated hyperphosphorylated form which leads to neuron apoptosis and transcriptional inactivation.

Its subcellular location is the nucleus. Functionally, transcriptional activator which binds specifically to the MEF2 element, 5'-YTA[AT](4)TAR-3', found in numerous muscle-specific genes. Also involved in the activation of numerous growth factor- and stress-induced genes. Mediates cellular functions not only in skeletal and cardiac muscle development, but also in neuronal differentiation and survival. Plays diverse roles in the control of cell growth, survival and apoptosis via p38 MAPK signaling in muscle-specific and/or growth factor-related transcription. In cerebellar granule neurons, phosphorylated and sumoylated MEF2A represses transcription of NUR77 promoting synaptic differentiation. Associates with chromatin to the ZNF16 promoter. The chain is Myocyte-specific enhancer factor 2A (MEF2A) from Bos taurus (Bovine).